A 366-amino-acid polypeptide reads, in one-letter code: sn-glycerol-3-phosphate import ATP-binding protein UgpC (366 aa).

The ABC transporter domain maps to 4–235 (LSLRNVQKTY…PASTFVAGFI (232 aa)). ATP is bound at residue 37-44 (GPSGCGKS).

The protein belongs to the ABC transporter superfamily. sn-glycerol-3-phosphate importer (TC 3.A.1.1.3) family. In terms of assembly, the complex is composed of two ATP-binding proteins (UgpC), two transmembrane proteins (UgpA and UgpE) and a solute-binding protein (UgpB).

It is found in the cell inner membrane. The enzyme catalyses sn-glycerol 3-phosphate(out) + ATP + H2O = sn-glycerol 3-phosphate(in) + ADP + phosphate + H(+). In terms of biological role, part of the ABC transporter complex UgpBAEC involved in sn-glycerol-3-phosphate (G3P) import. Responsible for energy coupling to the transport system. The chain is sn-glycerol-3-phosphate import ATP-binding protein UgpC from Cupriavidus necator (strain ATCC 17699 / DSM 428 / KCTC 22496 / NCIMB 10442 / H16 / Stanier 337) (Ralstonia eutropha).